Consider the following 30-residue polypeptide: Non-toxic phospholipase A2 (30 aa).

Tyr-26, Gly-28, and Gly-30 together coordinate Ca(2+).

This sequence belongs to the phospholipase A2 family. Group I subfamily. In terms of assembly, homodimer. It depends on Ca(2+) as a cofactor. In terms of processing, glycosylated. As to expression, expressed by the venom gland.

The protein localises to the secreted. The enzyme catalyses a 1,2-diacyl-sn-glycero-3-phosphocholine + H2O = a 1-acyl-sn-glycero-3-phosphocholine + a fatty acid + H(+). Enzymatic activity is diminished by Cd(2+) and Hg(2+). Its function is as follows. Relatively highly potent phospholipase A2 that displays potent antimicrobial and hemolytic activities. It does not show cytotoxic effects on the three human cell lines tested. PLA2 catalyzes the calcium-dependent hydrolysis of the 2-acyl groups in 3-sn-phosphoglycerides. It shows similar potencies on both Gram-negative and Gram-positive bacteria: B.cereus (MIC&gt;9 ug/ml), B.subtilis (MIC&gt;12 ug/ml), E.faecalis (MIC&gt;7 ug/ml), S.epidermidis (MIC&gt;12 ug/ml), S.aureux (MIC&gt;5 ug/ml), E.coli (MIC&gt;7 ug/ml), K.pneumonia (MIC&gt;8 ug/ml), P.aeruginosa (MIC&gt;10 ug/ml), and S.enteric (MIC&gt;9 ug/ml). It also shows antifungal activities: A.niger (MIC&gt;15 ug/ml), B.cinerea (MIC&gt;12 ug/ml), F.solani (MIC&gt;15 ug/ml), and P.digitatum (MIC&gt;10 ug/ml). The protein is Non-toxic phospholipase A2 of Walterinnesia aegyptia (Desert black snake).